A 570-amino-acid polypeptide reads, in one-letter code: Probable electron transfer flavoprotein-ubiquinone oxidoreductase (570 aa).

13–27 (VVIVGAGPAGLSAAI) is a binding site for FAD. Cys-515, Cys-539, Cys-542, and Cys-545 together coordinate [4Fe-4S] cluster. A 4Fe-4S ferredoxin-type domain is found at 530–559 (KRFQINAANCVHCKTCDIKDPSQNITWVTP).

The cofactor is [4Fe-4S] cluster. FAD serves as cofactor.

It catalyses the reaction a ubiquinone + reduced [electron-transfer flavoprotein] = a ubiquinol + oxidized [electron-transfer flavoprotein] + H(+). Functionally, accepts electrons from ETF and reduces ubiquinone. The sequence is that of Probable electron transfer flavoprotein-ubiquinone oxidoreductase (etfD) from Acinetobacter baylyi (strain ATCC 33305 / BD413 / ADP1).